The chain runs to 88 residues: C-C motif chemokine 18 (88 aa).

Positions methionine 1–cysteine 19 are cleaved as a signal peptide. 2 disulfides stabilise this stretch: cysteine 29–cysteine 53 and cysteine 30–cysteine 69.

It belongs to the intercrine beta (chemokine CC) family. In terms of processing, the Cys-29/Cys-53 disulfide bond is required for activity.

Its subcellular location is the secreted. Its function is as follows. Chemotactic factor that attracts lymphocytes but not monocytes or granulocytes. May be involved in B-cell migration into B-cell follicles in lymph nodes. Attracts naive T-lymphocytes toward dendritic cells and activated macrophages in lymph nodes, has chemotactic activity for naive T-cells, CD4+ and CD8+ T-cells and thus may play a role in both humoral and cell-mediated immunity responses. In Macaca mulatta (Rhesus macaque), this protein is C-C motif chemokine 18 (CCL18).